A 349-amino-acid polypeptide reads, in one-letter code: Selenide, water dikinase (349 aa).

Sec-19 is an active-site residue. Sec-19 is a non-standard amino acid (selenocysteine). ATP contacts are provided by residues Lys-22 and 50–52; that span reads LGD. Asp-53 lines the Mg(2+) pocket. ATP contacts are provided by residues Asp-69, Asp-92, and 140 to 142; that span reads GHT. Mg(2+) is bound at residue Asp-92. Asp-246 contacts Mg(2+).

Belongs to the selenophosphate synthase 1 family. Class I subfamily. In terms of assembly, homodimer. The cofactor is Mg(2+).

The catalysed reaction is hydrogenselenide + ATP + H2O = selenophosphate + AMP + phosphate + 2 H(+). Synthesizes selenophosphate from selenide and ATP. The polypeptide is Selenide, water dikinase (Methanocaldococcus jannaschii (strain ATCC 43067 / DSM 2661 / JAL-1 / JCM 10045 / NBRC 100440) (Methanococcus jannaschii)).